A 494-amino-acid chain; its full sequence is Glycosyl hydrolase family 109 protein (494 aa).

Disordered regions lie at residues 1–35 and 59–86; these read MNDA…LRTT and EAAQ…MAGV. The segment at residues 1–55 is a signal peptide (tat-type signal); sequence MNDAAPQNPGQDEAKGTGEKDNGGSMSPRSALRTTAGVAGAGLGLSALGTGTASA. A compositionally biased stretch (basic and acidic residues) spans 12–22; that stretch reads DEAKGTGEKDN. Residues 103 to 104, Asp-125, 174 to 177, 194 to 195, and Asn-223 each bind NAD(+); these read NR, WDFH, and EC. Residues Tyr-252, Arg-271, 283–286, and Tyr-365 contribute to the substrate site; that span reads YPNH. An NAD(+)-binding site is contributed by Tyr-283. Residues 463-494 form a disordered region; that stretch reads KANGKPQQIPDFTRGEWKKSRPGTDSEKPSEP. Residues 475 to 494 show a composition bias toward basic and acidic residues; it reads TRGEWKKSRPGTDSEKPSEP.

The protein belongs to the Gfo/Idh/MocA family. Glycosyl hydrolase 109 subfamily. It depends on NAD(+) as a cofactor. In terms of processing, predicted to be exported by the Tat system. The position of the signal peptide cleavage has not been experimentally proven.

Glycosidase. This chain is Glycosyl hydrolase family 109 protein, found in Streptomyces niveus (Streptomyces spheroides).